Reading from the N-terminus, the 422-residue chain is MKTIITFIIVFGILVLVHEFGHFYFAKRAGILVREFAIGMGPKIFAHRGKDGTTYTIRLLPIGGYVRMAGMGEDMTEITPGMPLSVELNAVGNVVKINTSKKVQLPHSIPMEVIDFDLEKELFIKGYVNGNEEEETVYKVDHDATIIESDGTEVRIAPLDVQFQSAKLSQRILTNFAGPMNNFILGFILFTLAVFLQGGVTDLNTNQIGQVIPNGPAAEAGLKENDKVLSINNQKIKKYEDFTTIVQKNPEKPLTFVVERNGKEEQLTVTPEKQKVEKQTIGKVGVYPYMKTDLPSKLMGGIQDTLNSTTQIFKALGSLFTGFSLNKLGGPVMMFKLSEEASNAGVSTVVFLMAMLSMNLGIINLLPIPALDGGKIVLNIIEGVRGKPISPEKEGIITLIGFGFVMVLMVLVTWNDIQRFFF.

Residue histidine 18 coordinates Zn(2+). Residue glutamate 19 is part of the active site. Residue histidine 22 coordinates Zn(2+). 3 helical membrane passes run 176 to 196 (FAGP…AVFL), 349 to 369 (VVFL…LPIP), and 394 to 414 (EGII…LVTW). The region spanning 179–273 (PMNNFILGFI…EEQLTVTPEK (95 aa)) is the PDZ domain.

It belongs to the peptidase M50B family. The cofactor is Zn(2+).

The protein resides in the cell membrane. In terms of biological role, involved in production of the peptide pheromone cAD1. This is Probable protease eep (eep) from Enterococcus faecalis (strain ATCC 700802 / V583).